Here is a 387-residue protein sequence, read N- to C-terminus: Calcium sensing receptor, chloroplastic (387 aa).

Residues 1 to 33 (MAMAEMATKSSLSAKLTLPSSSTKKTLSLRQVS) constitute a chloroplast transit peptide. At 34–186 (VSLPTSTSIS…TMDTISSADP (153 aa)) the chain is on the lumenal, thylakoid side. Residues 187–207 (SVIVVAAGAAFLAYLLLPPVF) traverse the membrane as a helical segment. At 208–387 (SAISFNFRGY…SGTKFLPSSD (180 aa)) the chain is on the stromal side. The Rhodanese domain maps to 231–352 (CTKNYLMVDI…WLQSRLGTDS (122 aa)). Thr380 is subject to Phosphothreonine.

In terms of processing, phosphorylation seems to be light-dependent. As to expression, predominantly expressed in the shoot, including guard cells.

It localises to the plastid. The protein localises to the chloroplast thylakoid membrane. Modulates cytoplasmic Ca(2+) concentration and is crucial for proper stomatal regulation in response to elevated levels of external Ca(2+). May function by regulating concentrations of inositol 1,4,5-trisphosphate (IP3), which in turn triggers release of Ca(2+) from internal stores. May play a role in de-etiolation. The chain is Calcium sensing receptor, chloroplastic (CAS) from Arabidopsis thaliana (Mouse-ear cress).